A 164-amino-acid polypeptide reads, in one-letter code: Crossover junction endodeoxyribonuclease RuvC (164 aa).

Catalysis depends on residues aspartate 7, glutamate 67, and aspartate 139. Residues aspartate 7, glutamate 67, and aspartate 139 each contribute to the Mg(2+) site.

It belongs to the RuvC family. Homodimer which binds Holliday junction (HJ) DNA. The HJ becomes 2-fold symmetrical on binding to RuvC with unstacked arms; it has a different conformation from HJ DNA in complex with RuvA. In the full resolvosome a probable DNA-RuvA(4)-RuvB(12)-RuvC(2) complex forms which resolves the HJ. Requires Mg(2+) as cofactor.

It is found in the cytoplasm. It catalyses the reaction Endonucleolytic cleavage at a junction such as a reciprocal single-stranded crossover between two homologous DNA duplexes (Holliday junction).. The RuvA-RuvB-RuvC complex processes Holliday junction (HJ) DNA during genetic recombination and DNA repair. Endonuclease that resolves HJ intermediates. Cleaves cruciform DNA by making single-stranded nicks across the HJ at symmetrical positions within the homologous arms, yielding a 5'-phosphate and a 3'-hydroxyl group; requires a central core of homology in the junction. The consensus cleavage sequence is 5'-(A/T)TT(C/G)-3'. Cleavage occurs on the 3'-side of the TT dinucleotide at the point of strand exchange. HJ branch migration catalyzed by RuvA-RuvB allows RuvC to scan DNA until it finds its consensus sequence, where it cleaves and resolves the cruciform DNA. The chain is Crossover junction endodeoxyribonuclease RuvC from Geobacter sulfurreducens (strain ATCC 51573 / DSM 12127 / PCA).